The chain runs to 107 residues: MRGGIGNMMKQAQKLQEELKKAQEEIAKMEVTGESGGGMVAVTINGKHEARRVSIDPSLFEDDREMVEDLVAAAFNDAVHKLEQESQQRMAGLSEGMNLPSGFKLPF.

This sequence belongs to the YbaB/EbfC family. As to quaternary structure, homodimer.

The protein resides in the cytoplasm. It localises to the nucleoid. Its function is as follows. Binds to DNA and alters its conformation. May be involved in regulation of gene expression, nucleoid organization and DNA protection. This Alkalilimnicola ehrlichii (strain ATCC BAA-1101 / DSM 17681 / MLHE-1) protein is Nucleoid-associated protein Mlg_1509.